The primary structure comprises 122 residues: UPF0231 protein VIBHAR_03438 (122 aa).

Belongs to the UPF0231 family.

This is UPF0231 protein VIBHAR_03438 from Vibrio campbellii (strain ATCC BAA-1116).